The chain runs to 994 residues: Regulator of telomere elongation helicase 1 homolog (994 aa).

One can recognise a Helicase ATP-binding domain in the interval 15–324; that stretch reads SKTSIKFPFE…KLIENLRTED (310 aa). 50-57 lines the ATP pocket; it reads SPTGTGKT. 4 residues coordinate [4Fe-4S] cluster: Cys142, Cys160, Cys169, and Cys208. A DEAH box motif is present at residues 251–254; the sequence is DEAH. Residues 818–831 are compositionally biased toward basic and acidic residues; that stretch reads KIEKKEKIEPRPIK. The tract at residues 818–896 is disordered; sequence KIEKKEKIEP…HVVSGSEPPK (79 aa). The segment covering 833 to 844 has biased composition (polar residues); sequence DSSSSSVFSLPT. Residues 847-856 show a composition bias toward basic and acidic residues; sequence DELKVKKWEQ. 2 stretches are compositionally biased toward polar residues: residues 859 to 869 and 880 to 889; these read DSQTNVSSSSD and PGNSSGQHVV.

It belongs to the helicase family. RAD3/XPD subfamily.

The protein localises to the nucleus. The enzyme catalyses ATP + H2O = ADP + phosphate + H(+). Functionally, a probable ATP-dependent DNA helicase implicated in DNA repair and the maintenance of genomic stability. Acts as an anti-recombinase to counteract toxic recombination and limit crossover during meiosis. Regulates meiotic recombination and crossover homeostasis by physically dissociating strand invasion events and thereby promotes noncrossover repair by meiotic synthesis dependent strand annealing (SDSA) as well as disassembly of D loop recombination intermediates. The protein is Regulator of telomere elongation helicase 1 homolog of Caenorhabditis briggsae.